A 339-amino-acid polypeptide reads, in one-letter code: Glyceraldehyde-3-phosphate dehydrogenase (339 aa).

Residues 12–13 (RI), Asp-39, Arg-84, and Ser-127 each bind NAD(+). D-glyceraldehyde 3-phosphate contacts are provided by residues 157–159 (SCT), Thr-188, Arg-203, 216–217 (TG), and Arg-239. Cys-158 acts as the Nucleophile in catalysis. Asn-320 serves as a coordination point for NAD(+).

It belongs to the glyceraldehyde-3-phosphate dehydrogenase family. As to quaternary structure, homotetramer.

Its subcellular location is the cytoplasm. It carries out the reaction D-glyceraldehyde 3-phosphate + phosphate + NAD(+) = (2R)-3-phospho-glyceroyl phosphate + NADH + H(+). It functions in the pathway carbohydrate degradation; glycolysis; pyruvate from D-glyceraldehyde 3-phosphate: step 1/5. Functionally, catalyzes the oxidative phosphorylation of glyceraldehyde 3-phosphate (G3P) to 1,3-bisphosphoglycerate (BPG) using the cofactor NAD. The first reaction step involves the formation of a hemiacetal intermediate between G3P and a cysteine residue, and this hemiacetal intermediate is then oxidized to a thioester, with concomitant reduction of NAD to NADH. The reduced NADH is then exchanged with the second NAD, and the thioester is attacked by a nucleophilic inorganic phosphate to produce BPG. This Mycobacterium bovis (strain ATCC BAA-935 / AF2122/97) protein is Glyceraldehyde-3-phosphate dehydrogenase (gap).